The primary structure comprises 241 residues: Uracil-DNA glycosylase (241 aa).

Residue D71 is the Proton acceptor of the active site.

The protein belongs to the uracil-DNA glycosylase (UDG) superfamily. UNG family.

Its subcellular location is the cytoplasm. The catalysed reaction is Hydrolyzes single-stranded DNA or mismatched double-stranded DNA and polynucleotides, releasing free uracil.. Functionally, excises uracil residues from the DNA which can arise as a result of misincorporation of dUMP residues by DNA polymerase or due to deamination of cytosine. The sequence is that of Uracil-DNA glycosylase from Xanthomonas axonopodis pv. citri (strain 306).